We begin with the raw amino-acid sequence, 294 residues long: HTH-type transcriptional regulator DgdR (294 aa).

In terms of domain architecture, HTH lysR-type spans 14–70 (LEIDLLRSFVVIAEVRALSRAAARVGRTQSALSQQMKRLEDIVDQPLFQRTGRGVVL). Residues 31 to 50 (LSRAAARVGRTQSALSQQMK) constitute a DNA-binding region (H-T-H motif).

It belongs to the LysR transcriptional regulatory family.

This chain is HTH-type transcriptional regulator DgdR (dgdR), found in Burkholderia cepacia (Pseudomonas cepacia).